We begin with the raw amino-acid sequence, 676 residues long: DNA ligase (676 aa).

Residues 41-45 (DLTYD), 90-91 (SL), and E123 each bind NAD(+). Residue K125 is the N6-AMP-lysine intermediate of the active site. The NAD(+) site is built by R146, E180, K293, and K317. Zn(2+)-binding residues include C408, C411, C424, and C429.

It belongs to the NAD-dependent DNA ligase family. LigA subfamily. Mg(2+) serves as cofactor. It depends on Mn(2+) as a cofactor.

It catalyses the reaction NAD(+) + (deoxyribonucleotide)n-3'-hydroxyl + 5'-phospho-(deoxyribonucleotide)m = (deoxyribonucleotide)n+m + AMP + beta-nicotinamide D-nucleotide.. Functionally, DNA ligase that catalyzes the formation of phosphodiester linkages between 5'-phosphoryl and 3'-hydroxyl groups in double-stranded DNA using NAD as a coenzyme and as the energy source for the reaction. It is essential for DNA replication and repair of damaged DNA. The sequence is that of DNA ligase from Borrelia turicatae (strain 91E135).